Consider the following 493-residue polypeptide: MSNYFNTLNLREKLDQLGRCRFMDRSEFSDGCNFLKGKKIVIVGCGAQGLNQGLNMRDSGLDISYALRKAAIEEKRPSFQRATENGFKVGTYEELIPTADLVINLTPDKQHSKVVSDVMPLMKQGAAFGYSHGFNIVEVGEQIREDITVVMSAPKCPGTEVREEYKRGFGVPTLIAVHPANDPKGEGMAIAKAWASATGGDRAGVLESSFVAEVKSDLMGEQTILCGMLQAGSIVCYDKLIADGKDPAYAGKLIQYGWETITEALKQGGITLMMDRLSNAAKLRAFELSEQIKEKLGFLYLKHMDDIISGEFSRVMMEDWANGDKDLLAWREATGKTAFENAPKADGIKISEQEYFDNGVLMVAMVKAGVEMAFDAMVASGIYEESAYYESLHELPLIANTIARKRLYEMNVVISDTAEYGNYLFSNVATPILAKEIIPALQKGDLGEPTPAVDIDNVTLRDVNDEIRNHPVELIGLELRGYMTDMKRISSQG.

In terms of domain architecture, KARI N-terminal Rossmann spans 14 to 208 (LDQLGRCRFM…GGDRAGVLES (195 aa)). Residues 45–48 (CGAQ), Arg68, Arg76, Ser78, and 108–110 (DKQ) each bind NADP(+). His132 is an active-site residue. Gly158 serves as a coordination point for NADP(+). KARI C-terminal knotted domains lie at 209–345 (SFVA…APKA) and 346–486 (DGIK…MTDM). Residues Asp217, Glu221, Glu390, and Glu394 each contribute to the Mg(2+) site. Residue Ser415 coordinates substrate.

This sequence belongs to the ketol-acid reductoisomerase family. Mg(2+) is required as a cofactor.

The catalysed reaction is (2R)-2,3-dihydroxy-3-methylbutanoate + NADP(+) = (2S)-2-acetolactate + NADPH + H(+). It carries out the reaction (2R,3R)-2,3-dihydroxy-3-methylpentanoate + NADP(+) = (S)-2-ethyl-2-hydroxy-3-oxobutanoate + NADPH + H(+). The protein operates within amino-acid biosynthesis; L-isoleucine biosynthesis; L-isoleucine from 2-oxobutanoate: step 2/4. It functions in the pathway amino-acid biosynthesis; L-valine biosynthesis; L-valine from pyruvate: step 2/4. Its function is as follows. Involved in the biosynthesis of branched-chain amino acids (BCAA). Catalyzes an alkyl-migration followed by a ketol-acid reduction of (S)-2-acetolactate (S2AL) to yield (R)-2,3-dihydroxy-isovalerate. In the isomerase reaction, S2AL is rearranged via a Mg-dependent methyl migration to produce 3-hydroxy-3-methyl-2-ketobutyrate (HMKB). In the reductase reaction, this 2-ketoacid undergoes a metal-dependent reduction by NADPH to yield (R)-2,3-dihydroxy-isovalerate. The protein is Ketol-acid reductoisomerase (NADP(+)) of Actinobacillus succinogenes (strain ATCC 55618 / DSM 22257 / CCUG 43843 / 130Z).